The chain runs to 401 residues: Phosphoglycerate kinase (401 aa).

Substrate contacts are provided by residues 21–23 (DLN), R36, 59–62 (HQGR), R116, and R156. ATP is bound by residues E331 and 357–360 (GGDT).

Belongs to the phosphoglycerate kinase family.

Its subcellular location is the cytoplasm. The catalysed reaction is (2R)-3-phosphoglycerate + ATP = (2R)-3-phospho-glyceroyl phosphate + ADP. It participates in carbohydrate degradation; glycolysis; pyruvate from D-glyceraldehyde 3-phosphate: step 2/5. The protein is Phosphoglycerate kinase (pgk) of Haloarcula vallismortis (Halobacterium vallismortis).